A 337-amino-acid polypeptide reads, in one-letter code: Cytoskeleton protein RodZ (337 aa).

The Cytoplasmic segment spans residues 1–111 (MNTEATHDQN…LGKRRKKRDG (111 aa)). Residues 19–71 (LRNAREQLGLSQQAVAERLCLKVSTVRDIEEDKAPADLASTFLRGYIRSYARL) form the HTH cro/C1-type domain. Positions 30 to 49 (QQAVAERLCLKVSTVRDIEE) form a DNA-binding region, H-T-H motif. A helical; Signal-anchor for type II membrane protein transmembrane segment spans residues 112–132 (WLMTFTWLVLFVVIGLSGAWW). Topologically, residues 133 to 337 (WQDHKAQQEE…TLNAEQSPAQ (205 aa)) are periplasmic. A compositionally biased stretch (polar residues) spans 145–167 (TMADQSSAELSSNSEQGQSVPLN). The tract at residues 145-218 (TMADQSSAEL…AVVSPSQANV (74 aa)) is disordered. Residues 168–207 (TSTTTDPATTSTPPASVDTTATNTQTPAVTAPAPAVDPQQ) show a composition bias toward low complexity. The segment covering 208-218 (NAVVSPSQANV) has biased composition (polar residues).

This sequence belongs to the RodZ family.

It localises to the cell inner membrane. Its function is as follows. Cytoskeletal protein that is involved in cell-shape control through regulation of the length of the long axis. This Shigella flexneri serotype 5b (strain 8401) protein is Cytoskeleton protein RodZ.